A 528-amino-acid polypeptide reads, in one-letter code: Probable rhamnogalacturonate lyase A (528 aa).

A signal peptide spans 1 to 20 (MFFQTGLLLSLSLWTKVAYA). 2 cysteine pairs are disulfide-bonded: Cys50/Cys93 and Cys184/Cys193. Residue Asn56 is glycosylated (N-linked (GlcNAc...) asparagine). N-linked (GlcNAc...) asparagine glycosylation is present at Asn351.

Belongs to the polysaccharide lyase 4 family.

It is found in the secreted. It carries out the reaction Endotype eliminative cleavage of L-alpha-rhamnopyranosyl-(1-&gt;4)-alpha-D-galactopyranosyluronic acid bonds of rhamnogalacturonan I domains in ramified hairy regions of pectin leaving L-rhamnopyranose at the reducing end and 4-deoxy-4,5-unsaturated D-galactopyranosyluronic acid at the non-reducing end.. Functionally, pectinolytic enzymes consist of four classes of enzymes: pectin lyase, polygalacturonase, pectin methylesterase and rhamnogalacturonase. Degrades the rhamnogalacturonan I (RG-I) backbone of pectin. Active against linseed rhamnogalacturonan. This is Probable rhamnogalacturonate lyase A (rglA) from Aspergillus clavatus (strain ATCC 1007 / CBS 513.65 / DSM 816 / NCTC 3887 / NRRL 1 / QM 1276 / 107).